Reading from the N-terminus, the 399-residue chain is Formate-dependent phosphoribosylglycinamide formyltransferase (399 aa).

Residues 21–22 (EL) and Glu81 each bind N(1)-(5-phospho-beta-D-ribosyl)glycinamide. ATP is bound by residues Arg114, Lys156, 161-166 (SSGKGQ), 196-199 (EGFI), and Glu204. Positions 119 to 314 (RLAAEELGLP…EFELHARAIL (196 aa)) constitute an ATP-grasp domain. Residues Glu273 and Glu285 each contribute to the Mg(2+) site. N(1)-(5-phospho-beta-D-ribosyl)glycinamide-binding positions include Asp292, Lys361, and 368–369 (RR). Residues 370–399 (MGVAVANGESTDQARERAKLAASKVRPTRT) are disordered.

Belongs to the PurK/PurT family. In terms of assembly, homodimer.

It catalyses the reaction N(1)-(5-phospho-beta-D-ribosyl)glycinamide + formate + ATP = N(2)-formyl-N(1)-(5-phospho-beta-D-ribosyl)glycinamide + ADP + phosphate + H(+). It participates in purine metabolism; IMP biosynthesis via de novo pathway; N(2)-formyl-N(1)-(5-phospho-D-ribosyl)glycinamide from N(1)-(5-phospho-D-ribosyl)glycinamide (formate route): step 1/1. In terms of biological role, involved in the de novo purine biosynthesis. Catalyzes the transfer of formate to 5-phospho-ribosyl-glycinamide (GAR), producing 5-phospho-ribosyl-N-formylglycinamide (FGAR). Formate is provided by PurU via hydrolysis of 10-formyl-tetrahydrofolate. The sequence is that of Formate-dependent phosphoribosylglycinamide formyltransferase from Dechloromonas aromatica (strain RCB).